The following is a 195-amino-acid chain: MKIWTSEHVFDHPWETVTTAAMQKYPNPMNPSVVGVDVLDRHVDPSGKLHSHRLLSTEWGLPSIVKSLIGAARTKTYVQEHSVVDPIRRTMELKSTNISFTNMVSVDERLTYKPHPQDPEKTVLTQEALITVKGVSLSSYLEGLMASTISSNANKGREAMEWVIHKLNAEIEELAASARGSIRTPMAAAAALVDK.

Residues 1–172 (MKIWTSEHVF…VIHKLNAEIE (172 aa)) enclose the PRELI/MSF1 domain. Phosphoserine occurs at positions 46 and 51.

The protein belongs to the slowmo family.

The sequence is that of PRELI domain containing protein 3B (Prelid3b) from Rattus norvegicus (Rat).